Here is a 141-residue protein sequence, read N- to C-terminus: HTH-type transcriptional repressor NsrR (141 aa).

An HTH rrf2-type domain is found at 2 to 129; the sequence is QLTNFTDFGL…DKHTIQDMLT (128 aa). Residues 28–51 constitute a DNA-binding region (H-T-H motif); it reads ITVVTETFDVSRNHMVKIINKLGQ. 3 residues coordinate [2Fe-2S] cluster: cysteine 91, cysteine 96, and cysteine 102.

[2Fe-2S] cluster serves as cofactor.

In terms of biological role, nitric oxide-sensitive repressor of genes involved in protecting the cell against nitrosative stress. May require iron for activity. The sequence is that of HTH-type transcriptional repressor NsrR from Aliivibrio fischeri (strain ATCC 700601 / ES114) (Vibrio fischeri).